A 163-amino-acid chain; its full sequence is Nucleotide-binding protein Cla_1551 (163 aa).

The protein belongs to the YajQ family.

Functionally, nucleotide-binding protein. This is Nucleotide-binding protein Cla_1551 from Campylobacter lari (strain RM2100 / D67 / ATCC BAA-1060).